The primary structure comprises 281 residues: Apolipoprotein E (281 aa).

A signal peptide spans 1-18; that stretch reads MKVLWAALLIALLAGCQG. 5 consecutive repeat copies span residues 82 to 103, 104 to 125, 126 to 147, 148 to 169, and 198 to 219. Residues 82-219 form a 5 X 22 AA approximate tandem repeats region; that stretch reads ALMDETMKEL…RLDEVKEQVE (138 aa). Residue Met-145 is modified to Methionine sulfoxide. Ser-149 bears the Phosphoserine mark. The tract at residues 160 to 170 is LDL and other lipoprotein receptors binding; that stretch reads HLRKLRTVSYT. Heparin is bound by residues 164 to 167 and 193 to 200; these read LRTV and GERLRTRM. The interval 230–281 is homooligomerization; the sequence is QQMRLQAEAFQARLKSWFEPLVEDMQRQWAGLVEKVQAAVGASAAPVPSDNH. A specificity for association with VLDL region spans residues 242–254; sequence RLKSWFEPLVEDM.

It belongs to the apolipoprotein A1/A4/E family. Homotetramer. May interact with ABCA1; functionally associated with ABCA1 in the biogenesis of HDLs. May interact with APP/A4 amyloid-beta peptide; the interaction is extremely stable in vitro but its physiological significance is unclear. May interact with MAPT. May interact with MAP2. In the cerebrospinal fluid, interacts with secreted SORL1. Interacts with PMEL; this allows the loading of PMEL luminal fragment on ILVs to induce fibril nucleation. In terms of processing, APOE exists as multiple glycosylated and sialylated glycoforms within cells and in plasma. The extent of glycosylation and sialylation are tissue and context specific. Glycated in plasma VLDL. Post-translationally, phosphorylated by FAM20C in the extracellular medium.

Its subcellular location is the secreted. The protein localises to the extracellular space. It is found in the extracellular matrix. It localises to the extracellular vesicle. The protein resides in the endosome. Its subcellular location is the multivesicular body. Its function is as follows. APOE is an apolipoprotein, a protein associating with lipid particles, that mainly functions in lipoprotein-mediated lipid transport between organs via the plasma and interstitial fluids. APOE is a core component of plasma lipoproteins and is involved in their production, conversion and clearance. Apolipoproteins are amphipathic molecules that interact both with lipids of the lipoprotein particle core and the aqueous environment of the plasma. As such, APOE associates with chylomicrons, chylomicron remnants, very low density lipoproteins (VLDL) and intermediate density lipoproteins (IDL) but shows a preferential binding to high-density lipoproteins (HDL). It also binds a wide range of cellular receptors including the LDL receptor/LDLR, the LDL receptor-related proteins LRP1, LRP2 and LRP8 and the very low-density lipoprotein receptor/VLDLR that mediate the cellular uptake of the APOE-containing lipoprotein particles. Finally, APOE also has a heparin-binding activity and binds heparan-sulfate proteoglycans on the surface of cells, a property that supports the capture and the receptor-mediated uptake of APOE-containing lipoproteins by cells. A main function of APOE is to mediate lipoprotein clearance through the uptake of chylomicrons, VLDLs, and HDLs by hepatocytes. APOE is also involved in the biosynthesis by the liver of VLDLs as well as their uptake by peripheral tissues ensuring the delivery of triglycerides and energy storage in muscle, heart and adipose tissues. By participating in the lipoprotein-mediated distribution of lipids among tissues, APOE plays a critical role in plasma and tissues lipid homeostasis. APOE is also involved in two steps of reverse cholesterol transport, the HDLs-mediated transport of cholesterol from peripheral tissues to the liver, and thereby plays an important role in cholesterol homeostasis. First, it is functionally associated with ABCA1 in the biogenesis of HDLs in tissues. Second, it is enriched in circulating HDLs and mediates their uptake by hepatocytes. APOE also plays an important role in lipid transport in the central nervous system, regulating neuron survival and sprouting. This chain is Apolipoprotein E (APOE), found in Aotus nancymaae (Ma's night monkey).